We begin with the raw amino-acid sequence, 523 residues long: Protein NAM8 (523 aa).

The tract at residues Met-1–Ser-35 is disordered. The span at Thr-24–Ser-35 shows a compositional bias: low complexity. RRM domains lie at Asn-54–Ser-145, Cys-163–Gly-242, and Thr-313–Ser-385. The segment at Pro-239–Leu-260 is disordered. Residues Thr-240–Leu-260 are compositionally biased toward polar residues.

Component of the U1 small nuclear ribonucleoprotein complex (U1 snRNP).

In terms of biological role, component of the U1 small nuclear ribonucleoprotein complex (U1 snRNP) involved in the initiation of meiotic recombination. Involved in the formation of DSBs at recombination hot-spots through meiosis-specific splicing of REC107 pre-mRNA. Collaborates with MER1 to promote splicing of essential meiotic mRNAs REC10, AMA1, MER3, HFM1, SPO22 and PCH2. NAM8 interacts with the pre-mRNA downstream of the 5' splice site, in a region of non-conserved sequence and is required for efficient splicing of uncapped RNA precursor. The protein is Protein NAM8 of Saccharomyces cerevisiae (strain ATCC 204508 / S288c) (Baker's yeast).